The following is a 441-amino-acid chain: Pre-mRNA-splicing factor PRP46 (441 aa).

Disordered stretches follow at residues 1–22 (MPVA…NEPS) and 81–107 (MGAS…LTNL). The span at 83-107 (ASSSALTKHTPSASQPTTHDSLTNL) shows a compositional bias: polar residues. WD repeat units lie at residues 130–169 (GHQG…LRLT), 172–211 (GHIM…VVRH), 214–253 (GHLS…PVVV), 256–295 (GHKS…TMTT), 298–336 (HHKK…LVLN), 339–379 (DQNA…QSTQ), and 388–427 (ESEN…TAES).

Belongs to the WD repeat PRL1/PRL2 family. Associated with the spliceosome.

The protein resides in the cytoplasm. Its subcellular location is the nucleus. Its function is as follows. Involved in pre-mRNA splicing and required for cell cycle progression at G2/M. This is Pre-mRNA-splicing factor PRP46 (PRP46) from Yarrowia lipolytica (strain CLIB 122 / E 150) (Yeast).